A 228-amino-acid chain; its full sequence is MERVKMINVQPMLEAAEFLERRERECEHGYASSFPSMPSPRLQHSKPPRRLSRAQKHSSGSSNTSTANRSTHNELEKNRRAHLRLCLERLKVLIPLGPDCTRHTTLGLLNKAKAHIKKLEEAERKSQHQLENLEREQRFLKRRLEQLQGPQEMERIRMDSIGSTISSDRSDSEREEIEVDVESTEFSHGEVDNISTTSISDIDDHSSLQSIGSDEGYSSASVKLSFTS.

Disordered stretches follow at residues 29-76 and 162-228; these read GYAS…NELE and GSTI…SFTS. The span at 43-56 shows a compositional bias: basic residues; that stretch reads QHSKPPRRLSRAQK. The segment covering 57–70 has biased composition (polar residues); that stretch reads HSSGSSNTSTANRS. Positions 67-119 constitute a bHLH domain; that stretch reads ANRSTHNELEKNRRAHLRLCLERLKVLIPLGPDCTRHTTLGLLNKAKAHIKKL. The segment covering 173–183 has biased composition (acidic residues); the sequence is EREEIEVDVES. Residues 216-228 show a composition bias toward polar residues; sequence GYSSASVKLSFTS.

In terms of assembly, efficient DNA binding requires dimerization with another bHLH protein. Binds DNA as a heterodimer with MAX. Interacts with SMC3. Interacts with RNF17.

The protein localises to the nucleus. Transcriptional repressor. MXI1 binds with MAX to form a sequence-specific DNA-binding protein complex which recognizes the core sequence 5'-CAC[GA]TG-3'. MXI1 thus antagonizes MYC transcriptional activity by competing for MAX. The polypeptide is Max-interacting protein 1 (Mxi1) (Rattus norvegicus (Rat)).